The sequence spans 205 residues: COP9 signalosome complex subunit 7 (205 aa).

Positions 1-135 constitute a PCI domain; the sequence is MEEKISQAID…QTLHVSWALE (135 aa). At Ser-183 the chain carries Phosphoserine.

It belongs to the CSN7/EIF3M family. CSN7 subfamily. In terms of assembly, component of the COP9 signalosome (CSN) complex.

In terms of biological role, component of the COP9 signalosome (CSN) complex that acts as an regulator of the ubiquitin (Ubl) conjugation pathway by mediating the deneddylation of the cullin subunit of SCF-type E3 ubiquitin-protein ligase complexes. This Schizosaccharomyces pombe (strain 972 / ATCC 24843) (Fission yeast) protein is COP9 signalosome complex subunit 7 (csn71).